A 393-amino-acid chain; its full sequence is Xylose transport system permease protein XylH (393 aa).

Residues 1-24 lie on the Periplasmic side of the membrane; that stretch reads MSKSNPSEVKLAVPTSGGFSGLKS. A helical transmembrane segment spans residues 25 to 45; that stretch reads LNLQVFVMIAAIIAIMLFFTW. Residues 46-64 lie on the Cytoplasmic side of the membrane; sequence TTDGAYLSARNVSNLLRQT. The chain crosses the membrane as a helical span at residues 65–85; sequence AITGILAVGMVFVIISAEIDL. Topologically, residues 86–102 are periplasmic; sequence SVGSMMGLLGGVAAICD. Residues 103–123 form a helical membrane-spanning segment; that stretch reads VWLGWPLPLTIIVTLVLGLLL. At 124–135 the chain is on the cytoplasmic side; it reads GAWNGWWVAYRK. The helical transmembrane segment at 136-156 threads the bilayer; the sequence is VPSFIVTLAGMLAFRGILIGI. Topologically, residues 157–175 are periplasmic; sequence TNGTTVSPTSAAMSQIGQS. Residues 176–196 form a helical membrane-spanning segment; the sequence is YLPASTGFIIGALGLMAFVGW. Residues 197-214 lie on the Cytoplasmic side of the membrane; that stretch reads QWRGRMRRQALGLQSPAS. The helical transmembrane segment at 215–235 threads the bilayer; that stretch reads TAVVGRQALTAIIVLGAIWLL. The Periplasmic segment spans residues 236-239; that stretch reads NDYR. A helical transmembrane segment spans residues 240–260; the sequence is GVPTPVLLLTLLLLGGMFMAT. Residues 261 to 287 are Cytoplasmic-facing; it reads RTAFGRRIYAIGGNLEAARLSGINVER. Residues 288 to 308 traverse the membrane as a helical segment; it reads TKLAVFAINGLMVAIAGLILS. Residues 309 to 312 lie on the Periplasmic side of the membrane; the sequence is SRLG. The chain crosses the membrane as a helical span at residues 313-333; that stretch reads AGSPSAGNIAELDAIAACVIG. The Cytoplasmic segment spans residues 334–336; the sequence is GTS. Residues 337 to 357 form a helical membrane-spanning segment; sequence LAGGVGSVAGAVMGAFIMASL. Over 358–365 the chain is Periplasmic; the sequence is DNGMSMMD. A helical transmembrane segment spans residues 366–386; sequence VPTFWQYIVKGAILLLAVWMD. Over 387 to 393 the chain is Cytoplasmic; that stretch reads SATKRRS.

This sequence belongs to the binding-protein-dependent transport system permease family. AraH/RbsC subfamily.

The protein resides in the cell inner membrane. Functionally, part of the binding-protein-dependent transport system for D-xylose. Probably responsible for the translocation of the substrate across the membrane. This is Xylose transport system permease protein XylH (xylH) from Escherichia coli O6:H1 (strain CFT073 / ATCC 700928 / UPEC).